We begin with the raw amino-acid sequence, 231 residues long: Elongation factor 1-delta 1 (231 aa).

The residue at position 2 (alanine 2) is an N-acetylalanine. The GST C-terminal domain occupies 10–73; the sequence is DAGLKKLDEH…LRISGVSAEG (64 aa). 2 disordered regions span residues 85 to 108 and 116 to 135; these read TEEAVATPPAADSKDAAADEEDDD and ETEEEKKAAEERAASVKAST. Residues 119–129 show a composition bias toward basic and acidic residues; it reads EEKKAAEERAA.

It belongs to the EF-1-beta/EF-1-delta family. As to quaternary structure, EF-1 is composed of 4 subunits: alpha, beta (1B-alpha=beta'), delta (1B-beta), and gamma (1B-gamma).

In terms of biological role, EF-1-beta and EF-1-delta stimulate the exchange of GDP bound to EF-1-alpha to GTP. This is Elongation factor 1-delta 1 from Arabidopsis thaliana (Mouse-ear cress).